The following is a 319-amino-acid chain: 1-aminocyclopropane-1-carboxylate oxidase 1 (319 aa).

A Fe2OG dioxygenase domain is found at P153–P253. Residues H177, D179, and H234 each contribute to the Fe cation site.

Belongs to the iron/ascorbate-dependent oxidoreductase family. Fe cation serves as cofactor.

The enzyme catalyses 1-aminocyclopropane-1-carboxylate + L-ascorbate + O2 = ethene + L-dehydroascorbate + hydrogen cyanide + CO2 + 2 H2O. The protein operates within alkene biosynthesis; ethylene biosynthesis via S-adenosyl-L-methionine; ethylene from S-adenosyl-L-methionine: step 2/2. The chain is 1-aminocyclopropane-1-carboxylate oxidase 1 (ACO1) from Petunia hybrida (Petunia).